Consider the following 241-residue polypeptide: 1-(5-phosphoribosyl)-5-[(5-phosphoribosylamino)methylideneamino] imidazole-4-carboxamide isomerase (241 aa).

The active-site Proton acceptor is Asp-10. Asp-129 functions as the Proton donor in the catalytic mechanism.

Belongs to the HisA/HisF family.

It localises to the cytoplasm. It catalyses the reaction 1-(5-phospho-beta-D-ribosyl)-5-[(5-phospho-beta-D-ribosylamino)methylideneamino]imidazole-4-carboxamide = 5-[(5-phospho-1-deoxy-D-ribulos-1-ylimino)methylamino]-1-(5-phospho-beta-D-ribosyl)imidazole-4-carboxamide. The protein operates within amino-acid biosynthesis; L-histidine biosynthesis; L-histidine from 5-phospho-alpha-D-ribose 1-diphosphate: step 4/9. The sequence is that of 1-(5-phosphoribosyl)-5-[(5-phosphoribosylamino)methylideneamino] imidazole-4-carboxamide isomerase from Salinispora tropica (strain ATCC BAA-916 / DSM 44818 / JCM 13857 / NBRC 105044 / CNB-440).